The sequence spans 662 residues: U6 snRNA-specific terminal uridylyltransferase (662 aa).

Mg(2+) contacts are provided by Asp-183 and Asp-185. The PAP-associated domain occupies 384-437 (CKFFRELFKYYANFDFTNKAIYGKKAMQKKTLSSAHGGVEESPLMLMDPMDITH).

This sequence belongs to the DNA polymerase type-B-like family. As to quaternary structure, forms a complex composed of sart-3, terminal uridylyltransferase usip-1 and U6 snRNA; complex formation is mediated by usip-1 and sart-3 binding to U6 snRNA. Requires Mg(2+) as cofactor. Mn(2+) is required as a cofactor. As to expression, ubiquitously expressed.

It is found in the nucleus. Its subcellular location is the nucleoplasm. The catalysed reaction is RNA(n) + UTP = RNA(n)-3'-uridine ribonucleotide + diphosphate. Its function is as follows. Acts as a specific terminal uridylyltransferase for U6 snRNA. Responsible for the addition of UTP at the 3' end of U6 snRNA which stabilizes U6 snRNA. Does not have activity towards modified uridine containing 3'-monophosphorylation or 2'-O-methylation. This is U6 snRNA-specific terminal uridylyltransferase from Caenorhabditis elegans.